The chain runs to 187 residues: Protein GrpE (187 aa).

The span at 1–11 shows a compositional bias: basic and acidic residues; it reads MTDSSNEHETE. A disordered region spans residues 1 to 23; that stretch reads MTDSSNEHETENPSVPNPDNEIQ.

Belongs to the GrpE family. As to quaternary structure, homodimer.

The protein resides in the cytoplasm. Participates actively in the response to hyperosmotic and heat shock by preventing the aggregation of stress-denatured proteins, in association with DnaK and GrpE. It is the nucleotide exchange factor for DnaK and may function as a thermosensor. Unfolded proteins bind initially to DnaJ; upon interaction with the DnaJ-bound protein, DnaK hydrolyzes its bound ATP, resulting in the formation of a stable complex. GrpE releases ADP from DnaK; ATP binding to DnaK triggers the release of the substrate protein, thus completing the reaction cycle. Several rounds of ATP-dependent interactions between DnaJ, DnaK and GrpE are required for fully efficient folding. The polypeptide is Protein GrpE (Chlamydia felis (strain Fe/C-56) (Chlamydophila felis)).